Reading from the N-terminus, the 940-residue chain is Mitogen-activated protein kinase kinase kinase 10 (940 aa).

In terms of domain architecture, SH3 spans 16 to 81 (PAGPVWTAVF…PSNYVAPAAP (66 aa)). The Protein kinase domain maps to 98–360 (LQLEEIIGVG…GSILKQLEVI (263 aa)). Residues 104–112 (IGVGGFGKV) and Lys125 each bind ATP. The Proton acceptor role is filled by Asp222. A Phosphothreonine; by autocatalysis modification is found at Thr258. Residue Ser262 is modified to Phosphoserine; by autocatalysis and MAP4K1. Leucine-zipper stretches follow at residues 384–405 (IQHM…EEEL) and 419–440 (LRRR…ELHL). Disordered stretches follow at residues 490-599 (PTLD…MAPG), 687-734 (RAGD…GLAP), and 749-917 (STRS…QPTL). 3 positions are modified to phosphoserine: Ser498, Ser502, and Ser506. Residues 501–511 (ASPPASPSIIP) show a composition bias toward low complexity. Phosphothreonine is present on Thr552. 2 stretches are compositionally biased toward basic and acidic residues: residues 560-572 (QKER…RLKA) and 687-698 (RAGDGEEQRRWL). The segment covering 765–775 (APSPPPSPLAP) has biased composition (pro residues). A compositionally biased stretch (basic and acidic residues) spans 822–840 (LRQREPLELTNHGPRDPLD). The residue at position 843 (Arg843) is an Omega-N-methylarginine. Residues 899 to 913 (PSRPDTPESPGPPSV) show a composition bias toward pro residues.

The protein belongs to the protein kinase superfamily. STE Ser/Thr protein kinase family. MAP kinase kinase kinase subfamily. As to quaternary structure, homodimer. Interacts with SH3RF2. It depends on Mg(2+) as a cofactor. Autophosphorylation on serine and threonine residues within the activation loop plays a role in enzyme activation.

The enzyme catalyses L-seryl-[protein] + ATP = O-phospho-L-seryl-[protein] + ADP + H(+). It carries out the reaction L-threonyl-[protein] + ATP = O-phospho-L-threonyl-[protein] + ADP + H(+). Its activity is regulated as follows. Homodimerization via the leucine zipper domains is required for autophosphorylation and subsequent activation. In terms of biological role, activates the JUN N-terminal pathway. This chain is Mitogen-activated protein kinase kinase kinase 10 (Map3k10), found in Mus musculus (Mouse).